The sequence spans 52 residues: Sperm protamine P1 (52 aa).

Belongs to the protamine P1 family. Cross-linked by interchain disulfide bonds around the DNA-helix. In terms of tissue distribution, testis.

The protein localises to the nucleus. It localises to the chromosome. Protamines substitute for histones in the chromatin of sperm during the haploid phase of spermatogenesis. They compact sperm DNA into a highly condensed, stable and inactive complex. The chain is Sperm protamine P1 (PRM1) from Alouatta seniculus (Red howler monkey).